The following is a 107-amino-acid chain: Pyrimidine/purine nucleoside phosphorylase (107 aa).

Belongs to the nucleoside phosphorylase PpnP family.

It carries out the reaction a purine D-ribonucleoside + phosphate = a purine nucleobase + alpha-D-ribose 1-phosphate. The catalysed reaction is adenosine + phosphate = alpha-D-ribose 1-phosphate + adenine. It catalyses the reaction cytidine + phosphate = cytosine + alpha-D-ribose 1-phosphate. The enzyme catalyses guanosine + phosphate = alpha-D-ribose 1-phosphate + guanine. It carries out the reaction inosine + phosphate = alpha-D-ribose 1-phosphate + hypoxanthine. The catalysed reaction is thymidine + phosphate = 2-deoxy-alpha-D-ribose 1-phosphate + thymine. It catalyses the reaction uridine + phosphate = alpha-D-ribose 1-phosphate + uracil. The enzyme catalyses xanthosine + phosphate = alpha-D-ribose 1-phosphate + xanthine. Catalyzes the phosphorolysis of diverse nucleosides, yielding D-ribose 1-phosphate and the respective free bases. Can use uridine, adenosine, guanosine, cytidine, thymidine, inosine and xanthosine as substrates. Also catalyzes the reverse reactions. This chain is Pyrimidine/purine nucleoside phosphorylase, found in Azoarcus sp. (strain BH72).